The sequence spans 62 residues: UPF0434 protein ABO_2103 (62 aa).

It belongs to the UPF0434 family.

This chain is UPF0434 protein ABO_2103, found in Alcanivorax borkumensis (strain ATCC 700651 / DSM 11573 / NCIMB 13689 / SK2).